A 151-amino-acid chain; its full sequence is Phosphopantetheine adenylyltransferase (151 aa).

T9 is a substrate binding site. ATP-binding positions include 9-10 (TF) and H17. 3 residues coordinate substrate: K41, T73, and R87. Residues 88–90 (GIR), E98, and 122–128 (LTSISST) contribute to the ATP site.

It belongs to the bacterial CoaD family. As to quaternary structure, homohexamer. Mg(2+) is required as a cofactor.

It is found in the cytoplasm. The enzyme catalyses (R)-4'-phosphopantetheine + ATP + H(+) = 3'-dephospho-CoA + diphosphate. It participates in cofactor biosynthesis; coenzyme A biosynthesis; CoA from (R)-pantothenate: step 4/5. Reversibly transfers an adenylyl group from ATP to 4'-phosphopantetheine, yielding dephospho-CoA (dPCoA) and pyrophosphate. This chain is Phosphopantetheine adenylyltransferase, found in Phocaeicola vulgatus (strain ATCC 8482 / DSM 1447 / JCM 5826 / CCUG 4940 / NBRC 14291 / NCTC 11154) (Bacteroides vulgatus).